Reading from the N-terminus, the 312-residue chain is Ribonuclease HIII (312 aa).

The 218-residue stretch at 95–312 (MSILGSDEVG…TEKAFRLLKK (218 aa)) folds into the RNase H type-2 domain. A divalent metal cation contacts are provided by Asp-101, Glu-102, and Asp-206.

Belongs to the RNase HII family. RnhC subfamily. The cofactor is Mn(2+). It depends on Mg(2+) as a cofactor.

The protein resides in the cytoplasm. The catalysed reaction is Endonucleolytic cleavage to 5'-phosphomonoester.. Functionally, endonuclease that specifically degrades the RNA of RNA-DNA hybrids. This Bacillus mycoides (strain KBAB4) (Bacillus weihenstephanensis) protein is Ribonuclease HIII.